The following is a 428-amino-acid chain: Bifunctional protein GlmU (428 aa).

The pyrophosphorylase stretch occupies residues Met-1–Arg-221. Residues Leu-6–Gly-9, Lys-20, Gln-74, Gly-79–Thr-80, Tyr-103–Asp-105, Gly-140, and Asn-219 contribute to the UDP-N-acetyl-alpha-D-glucosamine site. Asp-105 contributes to the Mg(2+) binding site. A Mg(2+)-binding site is contributed by Asn-219. Residues Ala-222 to Ser-242 are linker. The interval Gly-243–Arg-428 is N-acetyltransferase. Residues Arg-308 and Lys-326 each contribute to the UDP-N-acetyl-alpha-D-glucosamine site. His-338 (proton acceptor) is an active-site residue. Residues Tyr-341 and Asn-352 each coordinate UDP-N-acetyl-alpha-D-glucosamine. Acetyl-CoA is bound by residues Ala-355, Asn-361–Tyr-362, Ala-398, and Arg-415.

The protein in the N-terminal section; belongs to the N-acetylglucosamine-1-phosphate uridyltransferase family. In the C-terminal section; belongs to the transferase hexapeptide repeat family. As to quaternary structure, homotrimer. The cofactor is Mg(2+).

Its subcellular location is the cytoplasm. The catalysed reaction is alpha-D-glucosamine 1-phosphate + acetyl-CoA = N-acetyl-alpha-D-glucosamine 1-phosphate + CoA + H(+). The enzyme catalyses N-acetyl-alpha-D-glucosamine 1-phosphate + UTP + H(+) = UDP-N-acetyl-alpha-D-glucosamine + diphosphate. It participates in nucleotide-sugar biosynthesis; UDP-N-acetyl-alpha-D-glucosamine biosynthesis; N-acetyl-alpha-D-glucosamine 1-phosphate from alpha-D-glucosamine 6-phosphate (route II): step 2/2. The protein operates within nucleotide-sugar biosynthesis; UDP-N-acetyl-alpha-D-glucosamine biosynthesis; UDP-N-acetyl-alpha-D-glucosamine from N-acetyl-alpha-D-glucosamine 1-phosphate: step 1/1. It functions in the pathway bacterial outer membrane biogenesis; LPS lipid A biosynthesis. In terms of biological role, catalyzes the last two sequential reactions in the de novo biosynthetic pathway for UDP-N-acetylglucosamine (UDP-GlcNAc). The C-terminal domain catalyzes the transfer of acetyl group from acetyl coenzyme A to glucosamine-1-phosphate (GlcN-1-P) to produce N-acetylglucosamine-1-phosphate (GlcNAc-1-P), which is converted into UDP-GlcNAc by the transfer of uridine 5-monophosphate (from uridine 5-triphosphate), a reaction catalyzed by the N-terminal domain. This chain is Bifunctional protein GlmU, found in Anaplasma marginale (strain Florida).